A 396-amino-acid polypeptide reads, in one-letter code: Elongation factor Tu (396 aa).

One can recognise a tr-type G domain in the interval 10 to 206; that stretch reads KPHVNVGTIG…ALDTYIPTPE (197 aa). A G1 region spans residues 19–26; that stretch reads GHVDHGKT. GTP is bound at residue 19–26; that stretch reads GHVDHGKT. Threonine 26 contributes to the Mg(2+) binding site. Positions 60–64 are G2; the sequence is GITIN. The segment at 81 to 84 is G3; it reads DCPG. GTP-binding positions include 81–85 and 136–139; these read DCPGH and NKCD. Residues 136–139 form a G4 region; sequence NKCD. The tract at residues 174 to 176 is G5; sequence SAK.

It belongs to the TRAFAC class translation factor GTPase superfamily. Classic translation factor GTPase family. EF-Tu/EF-1A subfamily. In terms of assembly, monomer.

Its subcellular location is the cytoplasm. The catalysed reaction is GTP + H2O = GDP + phosphate + H(+). Functionally, GTP hydrolase that promotes the GTP-dependent binding of aminoacyl-tRNA to the A-site of ribosomes during protein biosynthesis. The polypeptide is Elongation factor Tu (Polynucleobacter asymbioticus (strain DSM 18221 / CIP 109841 / QLW-P1DMWA-1) (Polynucleobacter necessarius subsp. asymbioticus)).